Consider the following 471-residue polypeptide: Ribosomal protein uS12 methylthiotransferase RimO (471 aa).

Positions 19–134 constitute an MTTase N-terminal domain; it reads PRVGFVSLGC…VMNAVHTHLP (116 aa). [4Fe-4S] cluster contacts are provided by Cys-28, Cys-64, Cys-93, Cys-169, Cys-173, and Cys-176. Positions 155-396 constitute a Radical SAM core domain; the sequence is LTPRHYAYLK…MAVAEEVSTA (242 aa). A TRAM domain is found at 399–471; the sequence is QKRVGQTMQV…QGHDLVGQPV (73 aa).

This sequence belongs to the methylthiotransferase family. RimO subfamily. [4Fe-4S] cluster is required as a cofactor.

The protein localises to the cytoplasm. It catalyses the reaction L-aspartate(89)-[ribosomal protein uS12]-hydrogen + (sulfur carrier)-SH + AH2 + 2 S-adenosyl-L-methionine = 3-methylsulfanyl-L-aspartate(89)-[ribosomal protein uS12]-hydrogen + (sulfur carrier)-H + 5'-deoxyadenosine + L-methionine + A + S-adenosyl-L-homocysteine + 2 H(+). Catalyzes the methylthiolation of an aspartic acid residue of ribosomal protein uS12. The protein is Ribosomal protein uS12 methylthiotransferase RimO of Delftia acidovorans (strain DSM 14801 / SPH-1).